Consider the following 150-residue polypeptide: Large ribosomal subunit protein uL15 (150 aa).

The segment at Met1–Met57 is disordered. Residues Lys12 to Arg23 show a composition bias toward basic residues. Residues Ile25–Met37 are compositionally biased toward gly residues.

This sequence belongs to the universal ribosomal protein uL15 family. As to quaternary structure, part of the 50S ribosomal subunit.

Its function is as follows. Binds to the 23S rRNA. The sequence is that of Large ribosomal subunit protein uL15 from Synechococcus sp. (strain RCC307).